Consider the following 64-residue polypeptide: Large ribosomal subunit protein bL35c (64 aa).

Belongs to the bacterial ribosomal protein bL35 family.

Its subcellular location is the plastid. It is found in the chloroplast. The chain is Large ribosomal subunit protein bL35c from Phaeodactylum tricornutum (strain CCAP 1055/1).